A 196-amino-acid chain; its full sequence is Imidazole glycerol phosphate synthase subunit HisH (196 aa).

The Glutamine amidotransferase type-1 domain maps to 2 to 196 (KATLINYGVG…LRNFYSWVKR (195 aa)). The Nucleophile role is filled by Cys-76. Residues His-175 and Glu-177 contribute to the active site.

As to quaternary structure, heterodimer of HisH and HisF.

It is found in the cytoplasm. The catalysed reaction is 5-[(5-phospho-1-deoxy-D-ribulos-1-ylimino)methylamino]-1-(5-phospho-beta-D-ribosyl)imidazole-4-carboxamide + L-glutamine = D-erythro-1-(imidazol-4-yl)glycerol 3-phosphate + 5-amino-1-(5-phospho-beta-D-ribosyl)imidazole-4-carboxamide + L-glutamate + H(+). It catalyses the reaction L-glutamine + H2O = L-glutamate + NH4(+). The protein operates within amino-acid biosynthesis; L-histidine biosynthesis; L-histidine from 5-phospho-alpha-D-ribose 1-diphosphate: step 5/9. Functionally, IGPS catalyzes the conversion of PRFAR and glutamine to IGP, AICAR and glutamate. The HisH subunit catalyzes the hydrolysis of glutamine to glutamate and ammonia as part of the synthesis of IGP and AICAR. The resulting ammonia molecule is channeled to the active site of HisF. This Sulfurisphaera tokodaii (strain DSM 16993 / JCM 10545 / NBRC 100140 / 7) (Sulfolobus tokodaii) protein is Imidazole glycerol phosphate synthase subunit HisH.